Here is a 520-residue protein sequence, read N- to C-terminus: Peptide chain release factor 3 (520 aa).

Positions 8-277 (ESRKTFAIIS…FAPMPNARQT (270 aa)) constitute a tr-type G domain. Residues 17-24 (SHPDAGKT), 85-89 (DTPGH), and 139-142 (NKLD) contribute to the GTP site.

The protein belongs to the TRAFAC class translation factor GTPase superfamily. Classic translation factor GTPase family. PrfC subfamily.

It is found in the cytoplasm. Functionally, increases the formation of ribosomal termination complexes and stimulates activities of RF-1 and RF-2. It binds guanine nucleotides and has strong preference for UGA stop codons. It may interact directly with the ribosome. The stimulation of RF-1 and RF-2 is significantly reduced by GTP and GDP, but not by GMP. This chain is Peptide chain release factor 3, found in Staphylococcus aureus (strain JH1).